A 377-amino-acid chain; its full sequence is Succinyl-diaminopimelate desuccinylase (377 aa).

His67 serves as a coordination point for Zn(2+). Asp69 is an active-site residue. Zn(2+) is bound at residue Asp100. Residue Glu134 is the Proton acceptor of the active site. Positions 135, 163, and 349 each coordinate Zn(2+).

The protein belongs to the peptidase M20A family. DapE subfamily. In terms of assembly, homodimer. Zn(2+) serves as cofactor. The cofactor is Co(2+).

It carries out the reaction N-succinyl-(2S,6S)-2,6-diaminopimelate + H2O = (2S,6S)-2,6-diaminopimelate + succinate. It functions in the pathway amino-acid biosynthesis; L-lysine biosynthesis via DAP pathway; LL-2,6-diaminopimelate from (S)-tetrahydrodipicolinate (succinylase route): step 3/3. Its function is as follows. Catalyzes the hydrolysis of N-succinyl-L,L-diaminopimelic acid (SDAP), forming succinate and LL-2,6-diaminopimelate (DAP), an intermediate involved in the bacterial biosynthesis of lysine and meso-diaminopimelic acid, an essential component of bacterial cell walls. This chain is Succinyl-diaminopimelate desuccinylase, found in Mannheimia succiniciproducens (strain KCTC 0769BP / MBEL55E).